Consider the following 92-residue polypeptide: Phospholemman (92 aa).

The N-terminal stretch at 1-20 (MASLGHILVFCVGLLTMAKA) is a signal peptide. The Extracellular segment spans residues 21 to 35 (ESPKEHDPFTYDYQS). The chain crosses the membrane as a helical span at residues 36–56 (LQIGGLVIAGILFILGILIVL). At 57-92 (SRRCRCKFNQQQRTGEPDEEEGTFRSSIRRLSTRRR) the chain is on the cytoplasmic side. Cys60 is lipidated: S-palmitoyl cysteine. The residue at position 62 (Cys62) is an S-glutathionyl cysteine; alternate. Cys62 carries the S-palmitoyl cysteine; alternate lipid modification. The segment at 65–92 (NQQQRTGEPDEEEGTFRSSIRRLSTRRR) is disordered. Thr79 carries the phosphothreonine modification. Position 82 is a phosphoserine (Ser82). Ser83 carries the phosphoserine; by PKA and PKC modification. Over residues 83–92 (SIRRLSTRRR) the composition is skewed to basic residues. Ser88 is subject to Phosphoserine; by PKA. Thr89 carries the phosphothreonine; by PKC modification.

The protein belongs to the FXYD family. Homotetramer. Monomer. Regulatory subunit of the sodium/potassium-transporting ATPase (NKA) which is composed of a catalytic alpha subunit, an auxiliary non-catalytic beta subunit and an additional regulatory subunit. The monomeric form associates with NKA while the oligomeric form does not. Interacts with the catalytic alpha-1 subunit ATP1A1. Also interacts with the catalytic alpha-2 and alpha-3 subunits ATP1A2 and ATP1A3. Very little interaction with ATP1A1, ATP1A2 or ATP1A3 when phosphorylated at Ser-83. Interacts with the non-catalytic beta-1 subunit ATP1B1. Oxidative stress decreases interaction with ATP1A1 but increases interaction with ATP1B1. Post-translationally, major plasma membrane substrate for cAMP-dependent protein kinase (PKA) and protein kinase C (PKC) in several different tissues. Phosphorylated in response to insulin and adrenergic stimulation. Phosphorylation at Ser-88 stimulates sodium/potassium-transporting ATPase activity while the unphosphorylated form inhibits sodium/potassium-transporting ATPase activity. Phosphorylation increases tetramerization, decreases binding to ATP1A1 and reduces inhibition of ATP1A1 activity. Phosphorylation at Ser-83 leads to greatly reduced interaction with ATP1A1, ATP1A2 and ATP1A3. May be phosphorylated by DMPK. Palmitoylation increases half-life and stability and is enhanced upon phosphorylation at Ser-88 by PKA. As to expression, highest expression in skeletal muscle and heart. Moderate levels in brain, placenta, lung, liver, pancreas, uterus, bladder, prostate, small intestine and colon with mucosal lining. Very low levels in kidney, colon and small intestine without mucosa, prostate without endothelial lining, spleen, and testis.

The protein resides in the cell membrane. It localises to the sarcolemma. The protein localises to the apical cell membrane. It is found in the membrane. Its subcellular location is the caveola. The protein resides in the T-tubule. Its function is as follows. Associates with and regulates the activity of the sodium/potassium-transporting ATPase (NKA) which transports Na(+) out of the cell and K(+) into the cell. Inhibits NKA activity in its unphosphorylated state and stimulates activity when phosphorylated. Reduces glutathionylation of the NKA beta-1 subunit ATP1B1, thus reversing glutathionylation-mediated inhibition of ATP1B1. Contributes to female sexual development by maintaining the excitability of neurons which secrete gonadotropin-releasing hormone. This chain is Phospholemman, found in Homo sapiens (Human).